The following is a 275-amino-acid chain: Large ribosomal subunit protein uL2c (275 aa).

Positions 225–252 (MNPCDHPHGGGEGRSPIGRAKPVTPWGK) are disordered.

It belongs to the universal ribosomal protein uL2 family. In terms of assembly, part of the 50S ribosomal subunit.

It localises to the plastid. Its subcellular location is the chloroplast. The chain is Large ribosomal subunit protein uL2c (rpl2) from Guillardia theta (Cryptophyte).